The sequence spans 168 residues: Prolyl-tRNA synthetase associated domain-containing protein 1 (168 aa).

This sequence belongs to the PRORSD1 family.

This chain is Prolyl-tRNA synthetase associated domain-containing protein 1 (prorsd1p), found in Xenopus laevis (African clawed frog).